We begin with the raw amino-acid sequence, 348 residues long: D-alanine--D-alanine ligase (348 aa).

Positions 132-334 (KRVLESIGIP…YPDLIEVLVT (203 aa)) constitute an ATP-grasp domain. Residue 162-217 (LARLTFPIFVKPANMGSSVGISKAQTKVELRKAIQLALTYDSRVLIEQGVVAREIE) coordinates ATP. The Mg(2+) site is built by Asp288, Glu301, and Asn303.

The protein belongs to the D-alanine--D-alanine ligase family. Mg(2+) is required as a cofactor. The cofactor is Mn(2+).

Its subcellular location is the cytoplasm. The catalysed reaction is 2 D-alanine + ATP = D-alanyl-D-alanine + ADP + phosphate + H(+). It functions in the pathway cell wall biogenesis; peptidoglycan biosynthesis. Its function is as follows. Cell wall formation. The sequence is that of D-alanine--D-alanine ligase from Streptococcus pyogenes serotype M2 (strain MGAS10270).